Reading from the N-terminus, the 385-residue chain is Nuclear hormone receptor family member nhr-68 (385 aa).

Positions 4-79 (KEVCLVCQDF…VGMDKTSLQA (76 aa)) form a DNA-binding region, nuclear receptor. 2 consecutive NR C4-type zinc fingers follow at residues 7 to 27 (CLVC…CNGC) and 43 to 62 (CQFD…CRFC). Positions 81-110 (RDPIGYTKRNKKTLRHPMNELSGDESNSCT) are disordered. Positions 145–384 (PKRSLKQALC…SFAKELIFGD (240 aa)) constitute an NR LBD domain. The tract at residues 373-384 (FTSFAKELIFGD) is AF-2.

Belongs to the nuclear hormone receptor family.

It localises to the nucleus. Its function is as follows. Probable transcription factor that acts in a feed-forward loop with nhr-10 to activate genes, including itself, involved in the vitamin B12-independent breakdown of the short-chain fatty acid propionate. This pathway is triggered in response to a diet low in vitamin B12, when canonical vitamin B12-dependent propionate breakdown cannot function; the resulting accumulation of propionate is probably sensed by nhr-68 and/or nhr-10. This chain is Nuclear hormone receptor family member nhr-68, found in Caenorhabditis elegans.